A 449-amino-acid chain; its full sequence is Trigger factor (449 aa).

The PPIase FKBP-type domain occupies glycine 173–proline 258.

It belongs to the FKBP-type PPIase family. Tig subfamily.

The protein resides in the cytoplasm. It catalyses the reaction [protein]-peptidylproline (omega=180) = [protein]-peptidylproline (omega=0). In terms of biological role, involved in protein export. Acts as a chaperone by maintaining the newly synthesized protein in an open conformation. Functions as a peptidyl-prolyl cis-trans isomerase. The chain is Trigger factor from Burkholderia thailandensis (strain ATCC 700388 / DSM 13276 / CCUG 48851 / CIP 106301 / E264).